The primary structure comprises 70 residues: Large ribosomal subunit protein uL29 (70 aa).

Belongs to the universal ribosomal protein uL29 family.

The sequence is that of Large ribosomal subunit protein uL29 (rpl29) from Methanocaldococcus jannaschii (strain ATCC 43067 / DSM 2661 / JAL-1 / JCM 10045 / NBRC 100440) (Methanococcus jannaschii).